Reading from the N-terminus, the 600-residue chain is Cationic amino acid transporter 4, vacuolar (600 aa).

Over 1 to 32 the chain is Cytoplasmic; it reads MNSLVRRKQVDSVHLIKNDGPHQLAKKLSAVD. The chain crosses the membrane as a helical span at residues 33 to 53; sequence LVAIGVGTTIGAGVYILVGTV. The Vacuolar portion of the chain corresponds to 54–60; the sequence is AREHTGP. Residues 61-81 traverse the membrane as a helical segment; the sequence is ALAVSFFIAGVAAALSACCYA. At 82–92 the chain is on the cytoplasmic side; it reads ELASRCPSAGS. Residues 93-115 traverse the membrane as a helical segment; the sequence is AYHYAYICLGEGIAWLVGWALVL. The Vacuolar segment spans residues 116 to 152; sequence DYTIGGSAIARGITPNLASFFGGLDNLPVFLARQTIP. A helical transmembrane segment spans residues 153-173; it reads GVGIVVDPCAALLIMIVTILL. Over 174–184 the chain is Cytoplasmic; sequence CFGIKESSTVQ. The helical transmembrane segment at 185 to 205 threads the bilayer; it reads AIVTSVNVCTLVFIIVVGGYL. The Vacuolar portion of the chain corresponds to 206-220; that stretch reads ACKTGWVGYDLPSGY. A helical membrane pass occupies residues 221–241; sequence FPFGLNGILAGSAVVFFSYIG. Residues 242 to 264 lie on the Cytoplasmic side of the membrane; the sequence is FDTVTSTAEEVKNPQRDLPLGIG. Residues 265–285 form a helical membrane-spanning segment; the sequence is IALLICCILYMLLSVVIVGLV. Topologically, residues 286 to 308 are vacuolar; sequence PYYSLNPDTPISSAFGDSGMQWA. The helical transmembrane segment at 309–329 threads the bilayer; sequence AYILTTGAITALCASLLGSLL. Topologically, residues 330–360 are cytoplasmic; that stretch reads AQPRIFMAMARDGLLPAFFSEISPRTQVPVK. The chain crosses the membrane as a helical span at residues 361 to 381; that stretch reads STIAIGVLAAALAFFMDVAQL. Position 382 (Ser-382) is a topological domain, vacuolar. A helical transmembrane segment spans residues 383–403; that stretch reads EMVSVGTLMAFTAVAVCVLVL. At 404 to 462 the chain is on the cytoplasmic side; it reads RYVPPDGVPLSSSSQTLSDTDESRAETENFLVDAIESSDSPLLGNETARDEKYFGKRRK. Residues 463–483 form a helical membrane-spanning segment; that stretch reads IAAWSIALVCIGVLGLASAAS. The Vacuolar portion of the chain corresponds to 484-492; the sequence is AERLPSFPR. A helical membrane pass occupies residues 493–513; the sequence is FTICGVSAVILLGSLITLGYI. Residues 514–528 lie on the Cytoplasmic side of the membrane; it reads DEDEERHNFGHKGGF. A helical membrane pass occupies residues 529 to 549; that stretch reads LCPFVPYLPVLCILINTYLII. A topological domain (vacuolar) is located at residue Asn-550. Residues 551-571 traverse the membrane as a helical segment; the sequence is IGAGTWIRVLIWLLIGSMIYI. Residues 572–600 are Cytoplasmic-facing; sequence FYGRSHSLLNNAVYVPTMTCTRKTTDHLA.

This sequence belongs to the amino acid-polyamine-organocation (APC) superfamily. Cationic amino acid transporter (CAT) (TC 2.A.3.3) family. Expressed in roots, stems, flowers, and leaves.

The protein resides in the vacuole membrane. Functionally, permease involved in the transport of the cationic amino acids. This chain is Cationic amino acid transporter 4, vacuolar (CAT4), found in Arabidopsis thaliana (Mouse-ear cress).